A 372-amino-acid chain; its full sequence is tRNA pseudouridine synthase D (372 aa).

The active-site Nucleophile is Asp85. A TRUD domain is found at 160–330 (GFANYFGYQR…MQGSRRFMWG (171 aa)).

This sequence belongs to the pseudouridine synthase TruD family.

The catalysed reaction is uridine(13) in tRNA = pseudouridine(13) in tRNA. In terms of biological role, responsible for synthesis of pseudouridine from uracil-13 in transfer RNAs. The polypeptide is tRNA pseudouridine synthase D (Campylobacter jejuni subsp. jejuni serotype O:6 (strain 81116 / NCTC 11828)).